The primary structure comprises 917 residues: Translation initiation factor IF-2 (917 aa).

The segment at 241 to 312 is disordered; that stretch reads EEAKKGTLHK…GGWRSGGGRK (72 aa). Positions 252–262 are enriched in basic and acidic residues; it reads AKAEGAEDKKK. Residues 274-283 are compositionally biased toward polar residues; the sequence is SSETSSTWQE. The span at 298 to 308 shows a compositional bias: gly residues; that stretch reads TSGGVGGWRSG. The 168-residue stretch at 415–582 folds into the tr-type G domain; it reads PRPPVVTVMG…NVLLQAEILE (168 aa). The tract at residues 424–431 is G1; that stretch reads GHVDHGKT. Residue 424-431 coordinates GTP; sequence GHVDHGKT. The G2 stretch occupies residues 449 to 453; sequence GITQH. The G3 stretch occupies residues 470-473; sequence DTPG. GTP is bound by residues 470–474 and 524–527; these read DTPGH and NKID. The G4 stretch occupies residues 524 to 527; sequence NKID. The segment at 560–562 is G5; sequence SAK.

The protein belongs to the TRAFAC class translation factor GTPase superfamily. Classic translation factor GTPase family. IF-2 subfamily.

The protein localises to the cytoplasm. Functionally, one of the essential components for the initiation of protein synthesis. Protects formylmethionyl-tRNA from spontaneous hydrolysis and promotes its binding to the 30S ribosomal subunits. Also involved in the hydrolysis of GTP during the formation of the 70S ribosomal complex. The protein is Translation initiation factor IF-2 of Polynucleobacter necessarius subsp. necessarius (strain STIR1).